Here is a 468-residue protein sequence, read N- to C-terminus: Argininosuccinate lyase (468 aa).

It belongs to the lyase 1 family. Argininosuccinate lyase subfamily.

The protein resides in the cytoplasm. The catalysed reaction is 2-(N(omega)-L-arginino)succinate = fumarate + L-arginine. The protein operates within amino-acid biosynthesis; L-arginine biosynthesis; L-arginine from L-ornithine and carbamoyl phosphate: step 3/3. The chain is Argininosuccinate lyase from Zymomonas mobilis subsp. mobilis (strain ATCC 31821 / ZM4 / CP4).